Here is an 825-residue protein sequence, read N- to C-terminus: IQ and AAA domain-containing protein 1-like (825 aa).

The IQ domain occupies 206–235 (RDQGAIVIQKVWKGYLQRKRIEQDRRVEME). Basic and acidic residues predominate over residues 344-366 (QAQESRKKDQEKKEKNKEKEKEK). Disordered regions lie at residues 344-378 (QAQE…KEEK) and 459-487 (DREE…KDLT). Over residues 467–482 (KSPKKKGGKKSGKKKK) the composition is skewed to basic residues. ATP is bound at residue 572-579 (GPSGMGKK).

It belongs to the AAA ATPase family.

The protein is IQ and AAA domain-containing protein 1-like (Iqca1l) of Mus musculus (Mouse).